The primary structure comprises 325 residues: tRNA(Ile)-lysidine synthase (325 aa).

34-39 (SGGADS) lines the ATP pocket.

This sequence belongs to the tRNA(Ile)-lysidine synthase family.

The protein resides in the cytoplasm. It catalyses the reaction cytidine(34) in tRNA(Ile2) + L-lysine + ATP = lysidine(34) in tRNA(Ile2) + AMP + diphosphate + H(+). Functionally, ligates lysine onto the cytidine present at position 34 of the AUA codon-specific tRNA(Ile) that contains the anticodon CAU, in an ATP-dependent manner. Cytidine is converted to lysidine, thus changing the amino acid specificity of the tRNA from methionine to isoleucine. The chain is tRNA(Ile)-lysidine synthase from Rhodococcus jostii (strain RHA1).